A 452-amino-acid polypeptide reads, in one-letter code: Probable V-type proton ATPase subunit H (452 aa).

This sequence belongs to the V-ATPase H subunit family. As to quaternary structure, V-ATPase is a heteromultimeric enzyme composed of a peripheral catalytic V1 complex (components A to H) attached to an integral membrane V0 proton pore complex (components: a, c, c', c'' and d).

Subunit of the peripheral V1 complex of vacuolar ATPase. Subunit H activates the ATPase activity of the enzyme and couples ATPase activity to proton flow. Vacuolar ATPase is responsible for acidifying a variety of intracellular compartments in eukaryotic cells, thus providing most of the energy required for transport processes in the vacuolar system. The chain is Probable V-type proton ATPase subunit H from Oryza sativa subsp. japonica (Rice).